A 436-amino-acid chain; its full sequence is GTPase Der (436 aa).

EngA-type G domains lie at 4 to 167 and 175 to 351; these read PTIA…PAQE and IKFS…ESQN. GTP-binding positions include 10 to 17, 57 to 61, 119 to 122, 181 to 188, 229 to 233, and 294 to 297; these read GRPNVGKS, DTGGI, NKVD, DTAGM, and NKWD. The region spanning 352–436 is the KH-like domain; sequence TRIPSAVLND…PIHLIARKRK (85 aa).

This sequence belongs to the TRAFAC class TrmE-Era-EngA-EngB-Septin-like GTPase superfamily. EngA (Der) GTPase family. Associates with the 50S ribosomal subunit.

GTPase that plays an essential role in the late steps of ribosome biogenesis. In Streptococcus suis (strain 98HAH33), this protein is GTPase Der.